We begin with the raw amino-acid sequence, 435 residues long: D-aminoacyl-tRNA deacylase (435 aa).

This sequence belongs to the DtdA deacylase family. As to quaternary structure, monomer. The cofactor is Zn(2+).

The catalysed reaction is a D-aminoacyl-tRNA + H2O = a tRNA + a D-alpha-amino acid + H(+). The enzyme catalyses glycyl-tRNA(Ala) + H2O = tRNA(Ala) + glycine + H(+). In terms of biological role, D-aminoacyl-tRNA deacylase with broad substrate specificity. By recycling D-aminoacyl-tRNA to D-amino acids and free tRNA molecules, this enzyme counteracts the toxicity associated with the formation of D-aminoacyl-tRNA entities in vivo. In Methanosphaerula palustris (strain ATCC BAA-1556 / DSM 19958 / E1-9c), this protein is D-aminoacyl-tRNA deacylase.